Consider the following 399-residue polypeptide: S-adenosylmethionine synthase (399 aa).

His-17 lines the ATP pocket. Asp-19 serves as a coordination point for Mg(2+). Glu-45 lines the K(+) pocket. L-methionine is bound by residues Glu-58 and Gln-101. The tract at residues Gln-101–Gln-111 is flexible loop. Residues Asp-177–Lys-179, Arg-244–Phe-245, Asp-253, Arg-259–Lys-260, Ala-276, and Lys-280 each bind ATP. Asp-253 provides a ligand contact to L-methionine. Lys-284 serves as a coordination point for L-methionine.

Belongs to the AdoMet synthase family. As to quaternary structure, homotetramer; dimer of dimers. Requires Mg(2+) as cofactor. K(+) serves as cofactor.

Its subcellular location is the cytoplasm. The enzyme catalyses L-methionine + ATP + H2O = S-adenosyl-L-methionine + phosphate + diphosphate. The protein operates within amino-acid biosynthesis; S-adenosyl-L-methionine biosynthesis; S-adenosyl-L-methionine from L-methionine: step 1/1. Functionally, catalyzes the formation of S-adenosylmethionine (AdoMet) from methionine and ATP. The overall synthetic reaction is composed of two sequential steps, AdoMet formation and the subsequent tripolyphosphate hydrolysis which occurs prior to release of AdoMet from the enzyme. This is S-adenosylmethionine synthase from Bacillus cereus (strain B4264).